Consider the following 109-residue polypeptide: Cell division protein ZapA (109 aa).

Positions 21-97 (PEQRDALSQA…QTIEQALLDQ (77 aa)) form a coiled coil.

This sequence belongs to the ZapA family. Type 1 subfamily. In terms of assembly, homodimer. Interacts with FtsZ.

The protein resides in the cytoplasm. Functionally, activator of cell division through the inhibition of FtsZ GTPase activity, therefore promoting FtsZ assembly into bundles of protofilaments necessary for the formation of the division Z ring. It is recruited early at mid-cell but it is not essential for cell division. In Enterobacter sp. (strain 638), this protein is Cell division protein ZapA.